The following is a 724-amino-acid chain: Small conductance calcium-activated potassium channel protein 3 (724 aa).

Basic and acidic residues predominate over residues 1–11 (MDTSGHFHDSG). Disordered stretches follow at residues 1-161 (MDTS…RDSN) and 232-251 (ATHN…FPKA). The segment covering 34 to 58 (QPPPPPPPPAPPAAPQQPPGPPLQP) has biased composition (pro residues). Residues 59 to 88 (QPLQLQQQQQQQQQQPPHPLSQLAQLQSQP) show a composition bias toward low complexity. Residues 105–125 (PSSNSTAILHPSSRQGSQLNL) show a composition bias toward polar residues. Residues 131-140 (GHSPSSTATS) are compositionally biased toward low complexity. At Ser160 the chain carries Phosphoserine. The span at 232–249 (ATHNHQHAGTTASSTTFP) shows a compositional bias: polar residues. Residues 281–301 (LIFGMFGIVVMVIETELSWGL) traverse the membrane as a helical segment. Residues 308 to 328 (FSLALKCLISLSTIILLGLII) traverse the membrane as a helical segment. The chain crosses the membrane as a helical span at residues 359–379 (ISLEMLVCAIHPIPGEYKFFW). The chain crosses the membrane as a helical span at residues 398–418 (IILSIPMFLRLYLIARVMLLH). The helical transmembrane segment at 447 to 467 (LMTICPGTVLLVFSISLWIIA) threads the bilayer. An intramembrane region (pore-forming) is located at residues 487 to 507 (FLGAMWLISITFLSIGYGDMV). A helical transmembrane segment spans residues 516 to 536 (VCLLTGIMGAGCTALVVAVVA). The calmodulin-binding stretch occupies residues 554–630 (DTQLTKRIKN…LVDLSKMQNV (77 aa)). The stretch at 635–662 (ITELNDRSEDLEKQIGSLESKLEHLTAS) forms a coiled coil. Residues 702–724 (LSDSPIGVSSTSFPTPYTSSSSC) form a disordered region. Low complexity predominate over residues 710–724 (SSTSFPTPYTSSSSC).

The protein belongs to the potassium channel KCNN family. KCa2.3/KCNN3 subfamily. As to quaternary structure, homodimer. Heteromultimer with KCNN2 or KCNN1; this modulates plasma membrane expression and consequently the small conductance calcium-activated potassium channel activity. The complex is composed of 4 channel subunits each of which binds to a calmodulin subunit which regulates the channel activity through calcium-binding. Interacts with CALM1.

Its subcellular location is the cell membrane. The protein resides in the cytoplasm. The protein localises to the myofibril. It is found in the sarcomere. It localises to the z line. The catalysed reaction is K(+)(in) = K(+)(out). Its activity is regulated as follows. Inhibited by bee venom neurotoxin apamin. In terms of biological role, small conductance calcium-activated potassium channel that mediates the voltage-independent transmembrane transfer of potassium across the cell membrane through a constitutive interaction with calmodulin which binds the intracellular calcium allowing its opening. The current is characterized by a voltage-independent activation, an intracellular calcium concentration increase-dependent activation and a single-channel conductance of 10 picosiemens. Also presents an inwardly rectifying current, thus reducing its already small outward conductance of potassium ions, which is particularly the case when the membrane potential displays positive values, above + 20 mV. Activation is followed by membrane hyperpolarization. Thought to regulate neuronal excitability by contributing to the slow component of synaptic afterhyperpolarization. This is Small conductance calcium-activated potassium channel protein 3 from Sus scrofa (Pig).